We begin with the raw amino-acid sequence, 292 residues long: Acetylglutamate kinase (292 aa).

Substrate contacts are provided by residues 60–61, Arg-82, and Asn-187; that span reads GG.

Belongs to the acetylglutamate kinase family. ArgB subfamily.

The protein resides in the cytoplasm. It carries out the reaction N-acetyl-L-glutamate + ATP = N-acetyl-L-glutamyl 5-phosphate + ADP. It functions in the pathway amino-acid biosynthesis; L-arginine biosynthesis; N(2)-acetyl-L-ornithine from L-glutamate: step 2/4. Functionally, catalyzes the ATP-dependent phosphorylation of N-acetyl-L-glutamate. In Methanobrevibacter smithii (strain ATCC 35061 / DSM 861 / OCM 144 / PS), this protein is Acetylglutamate kinase.